The chain runs to 338 residues: Fe-S cluster assembly protein DRE2 (338 aa).

An N-terminal SAM-like domain region spans residues 1 to 165 (MAKSGLLLIH…LPSFKKAANK (165 aa)). A linker region spans residues 166-232 (PLPTFKKKVE…DDLLNEEDAK (67 aa)). The tract at residues 181-223 (VEARVHKAENDDDELEDEEDENLFDASRSKYFDEDDSESLDED) is disordered. 2 stretches are compositionally biased toward acidic residues: residues 190–203 (NDDD…DENL) and 213–223 (DEDDSESLDED). 4 residues coordinate [2Fe-2S] cluster: C242, C253, C256, and C258. Residues 242-258 (CGKSKTKKKKACKDCSC) form a fe-S binding site A region. Residues C301, C304, C312, and C315 each coordinate [4Fe-4S] cluster. 2 consecutive short sequence motifs (cx2C motif) follow at residues 301–304 (CGSC) and 312–315 (CTGC). Positions 301–315 (CGSCSLGDAFRCTGC) are fe-S binding site B.

The protein belongs to the anamorsin family. Monomer. Interacts with TAH18. Interacts with MIA40. It depends on [2Fe-2S] cluster as a cofactor. [4Fe-4S] cluster is required as a cofactor.

It is found in the cytoplasm. Its subcellular location is the mitochondrion intermembrane space. Functionally, component of the cytosolic iron-sulfur (Fe-S) protein assembly (CIA) machinery required for the maturation of extramitochondrial Fe-S proteins. Part of an electron transfer chain functioning in an early step of cytosolic Fe-S biogenesis, facilitating the de novo assembly of a [4Fe-4S] cluster on the scaffold complex CFD1-NBP35. Electrons are transferred to DRE2 from NADPH via the FAD- and FMN-containing protein TAH18. TAH18-DRE2 are also required for the assembly of the diferric tyrosyl radical cofactor of ribonucleotide reductase (RNR), probably by providing electrons for reduction during radical cofactor maturation in the catalytic small subunit RNR2. This is Fe-S cluster assembly protein DRE2 from Candida glabrata (strain ATCC 2001 / BCRC 20586 / JCM 3761 / NBRC 0622 / NRRL Y-65 / CBS 138) (Yeast).